The sequence spans 908 residues: Probable RNA-directed DNA polymerase from transposon X-element (908 aa).

The Reverse transcriptase domain maps to 481–752; sequence AIVRLQYFPY…NAAKYLGVLL (272 aa). A disordered region spans residues 883–908; sequence RPPRRLNRRQPRDLITRSPLTRVRRS.

Mg(2+) is required as a cofactor. It depends on Mn(2+) as a cofactor.

The catalysed reaction is DNA(n) + a 2'-deoxyribonucleoside 5'-triphosphate = DNA(n+1) + diphosphate. This chain is Probable RNA-directed DNA polymerase from transposon X-element (X-element\ORF2), found in Drosophila melanogaster (Fruit fly).